Consider the following 225-residue polypeptide: Phosphoglycolate phosphatase (225 aa).

Catalysis depends on Asp11, which acts as the Nucleophile. Mg(2+) is bound by residues Asp11, Asp13, and Asp174.

This sequence belongs to the HAD-like hydrolase superfamily. CbbY/CbbZ/Gph/YieH family. Mg(2+) is required as a cofactor.

It catalyses the reaction 2-phosphoglycolate + H2O = glycolate + phosphate. The protein operates within organic acid metabolism; glycolate biosynthesis; glycolate from 2-phosphoglycolate: step 1/1. Functionally, specifically catalyzes the dephosphorylation of 2-phosphoglycolate. Is involved in the dissimilation of the intracellular 2-phosphoglycolate formed during the DNA repair of 3'-phosphoglycolate ends, a major class of DNA lesions induced by oxidative stress. This Nitrosococcus oceani (strain ATCC 19707 / BCRC 17464 / JCM 30415 / NCIMB 11848 / C-107) protein is Phosphoglycolate phosphatase.